The primary structure comprises 408 residues: Indian hedgehog protein (408 aa).

The first 23 residues, 1–23 (MKPARLLLLLSGCALLLAPAVRC), serve as a signal peptide directing secretion. Cys24 is lipidated: N-palmitoyl cysteine. The Ca(2+) site is built by Glu90, Glu91, Asp96, Thr126, Glu127, Asp130, and Asp132. Zn(2+)-binding residues include His141, Asp148, and His183. Residue Gly198 is the site of Cholesterol glycine ester attachment.

It belongs to the hedgehog family. In terms of assembly, multimer. Interacts with BOC and CDON. Interacts with PTCH1. Interacts with glypican GPC3. Cholesterylation is required for N-product targeting to lipid rafts and multimerization. Post-translationally, the C-terminal domain displays an autoproteolysis activity and a cholesterol transferase activity. Both activities result in the cleavage of the full-length protein and covalent attachment of a cholesterol moiety to the C-terminal of the newly generated N-product. The N-product is the active species in both local and long-range signaling, whereas the C-product is degraded in the endoplasmic reticulum. In terms of processing, N-palmitoylation by HHAT of N-product is required for indian hedgehog protein N-product multimerization and full activity. In terms of tissue distribution, expressed in developing midgut, lung and cartilage of developing long bones in the limb.

It is found in the cell membrane. The protein resides in the endoplasmic reticulum membrane. The protein localises to the golgi apparatus membrane. It localises to the secreted. It carries out the reaction glycyl-L-cysteinyl-[protein] + cholesterol + H(+) = [protein]-C-terminal glycyl cholesterol ester + N-terminal L-cysteinyl-[protein]. Plays a role in embryonic morphogenesis; it is involved in the regulation of endochondral skeleton formation, and the development of retinal pigment epithelium (RPE), photoreceptors and periocular tissues. Its function is as follows. The C-terminal part of the indian hedgehog protein precursor displays an autoproteolysis and a cholesterol transferase activity. Both activities result in the cleavage of the full-length protein into two parts followed by the covalent attachment of a cholesterol moiety to the C-terminal of the newly generated N-product. Both activities occur in the endoplasmic reticulum. Functionally, the dually lipidated indian hedgehog protein N-product is a morphogen which is essential for a variety of patterning events during development. Binds to the patched (PTCH1) receptor, which functions in association with smoothened (SMO), to activate the transcription of target genes. Plays a role in morphogenesis of the skeleton by coordinating growth and differentiation of the endochondral skeleton. Positively regulates PTHLH expression during endochondral bone formation preventing chondrocyte hypertrophy. In contrast, participates in normal chondrocyte proliferation in a PTHLH-independent pathway. This chain is Indian hedgehog protein, found in Gallus gallus (Chicken).